The primary structure comprises 623 residues: Transketolase (623 aa).

Met1 is subject to N-acetylmethionine. A Phosphoserine modification is found at Ser3. An N6-acetyllysine mark is found at Lys6 and Lys11. His37 is a binding site for substrate. Ser40 and His77 together coordinate thiamine diphosphate. At Ser104 the chain carries Phosphoserine. 123 to 125 is a binding site for thiamine diphosphate; it reads GSL. The residue at position 144 (Lys144) is an N6-acetyllysine. Asp155 provides a ligand contact to Mg(2+). Thiamine diphosphate is bound by residues Gly156 and Asn185. Residues Asn185 and Leu187 each contribute to the Mg(2+) site. 3 positions are modified to N6-acetyllysine: Lys204, Lys232, and Lys241. 2 residues coordinate thiamine diphosphate: Lys244 and His258. His258 is a binding site for substrate. Position 260 is an N6-acetyllysine (Lys260). Residue Tyr275 is modified to Phosphotyrosine. Thr287 is subject to Phosphothreonine. Ser295 is modified (phosphoserine). Residues Arg318 and Ser345 each coordinate substrate. Residue Ser345 is modified to Phosphoserine. A Glycyl lysine isopeptide (Lys-Gly) (interchain with G-Cter in SUMO2) cross-link involves residue Lys352. Catalysis depends on Glu366, which acts as the Proton donor. Phe392 contacts thiamine diphosphate. The substrate site is built by His416 and Asp424. Gln428 is a binding site for thiamine diphosphate. Arg474 provides a ligand contact to substrate. N6-acetyllysine is present on residues Lys538 and Lys603.

This sequence belongs to the transketolase family. As to quaternary structure, homodimer. Requires Mg(2+) as cofactor. The cofactor is Ca(2+). Mn(2+) is required as a cofactor. It depends on Co(2+) as a cofactor. Thiamine diphosphate serves as cofactor.

It carries out the reaction D-sedoheptulose 7-phosphate + D-glyceraldehyde 3-phosphate = aldehydo-D-ribose 5-phosphate + D-xylulose 5-phosphate. In terms of biological role, catalyzes the transfer of a two-carbon ketol group from a ketose donor to an aldose acceptor, via a covalent intermediate with the cofactor thiamine pyrophosphate. This is Transketolase (TKT) from Homo sapiens (Human).